Here is a 77-residue protein sequence, read N- to C-terminus: MKFSMRLISAVLFLVMIFVATGMGPVTVEARTCASQSQRFKGKCVSDTNCENVCHNEGFPGGDCRGFRRRCFCTRNC.

The N-terminal stretch at Met-1 to Ala-30 is a signal peptide. Disulfide bonds link Cys-33/Cys-77, Cys-44/Cys-64, Cys-50/Cys-71, and Cys-54/Cys-73.

The protein belongs to the DEFL family. Expressed in roots, siliques and seeds.

It localises to the secreted. In terms of biological role, confers broad-spectrum resistance to pathogens. In Arabidopsis thaliana (Mouse-ear cress), this protein is Defensin-like protein 4 (PDF2.1).